Consider the following 256-residue polypeptide: uncharacterized protein (256 aa).

An N-terminal signal peptide occupies residues M1–G24. C25 carries the N-palmitoyl cysteine lipid modification. C25 carries the S-diacylglycerol cysteine lipid modification.

This sequence belongs to the staphylococcal tandem lipoprotein family.

Its subcellular location is the cell membrane. This is an uncharacterized protein from Staphylococcus aureus (strain NCTC 8325 / PS 47).